We begin with the raw amino-acid sequence, 553 residues long: Dihydroxy-acid dehydratase (553 aa).

Asp-78 is a Mg(2+) binding site. Residue Cys-119 coordinates [2Fe-2S] cluster. Mg(2+)-binding residues include Asp-120 and Lys-121. Lys-121 carries the N6-carboxylysine modification. [2Fe-2S] cluster is bound at residue Cys-193. Residue Glu-441 participates in Mg(2+) binding. Catalysis depends on Ser-467, which acts as the Proton acceptor.

This sequence belongs to the IlvD/Edd family. As to quaternary structure, homodimer. Requires [2Fe-2S] cluster as cofactor. The cofactor is Mg(2+).

It carries out the reaction (2R)-2,3-dihydroxy-3-methylbutanoate = 3-methyl-2-oxobutanoate + H2O. It catalyses the reaction (2R,3R)-2,3-dihydroxy-3-methylpentanoate = (S)-3-methyl-2-oxopentanoate + H2O. It functions in the pathway amino-acid biosynthesis; L-isoleucine biosynthesis; L-isoleucine from 2-oxobutanoate: step 3/4. The protein operates within amino-acid biosynthesis; L-valine biosynthesis; L-valine from pyruvate: step 3/4. Functionally, functions in the biosynthesis of branched-chain amino acids. Catalyzes the dehydration of (2R,3R)-2,3-dihydroxy-3-methylpentanoate (2,3-dihydroxy-3-methylvalerate) into 2-oxo-3-methylpentanoate (2-oxo-3-methylvalerate) and of (2R)-2,3-dihydroxy-3-methylbutanoate (2,3-dihydroxyisovalerate) into 2-oxo-3-methylbutanoate (2-oxoisovalerate), the penultimate precursor to L-isoleucine and L-valine, respectively. The protein is Dihydroxy-acid dehydratase of Trichlorobacter lovleyi (strain ATCC BAA-1151 / DSM 17278 / SZ) (Geobacter lovleyi).